Reading from the N-terminus, the 210-residue chain is Uridine kinase (210 aa).

13-20 provides a ligand contact to ATP; it reads GGSGSGKT.

The protein belongs to the uridine kinase family.

The protein localises to the cytoplasm. It catalyses the reaction uridine + ATP = UMP + ADP + H(+). It carries out the reaction cytidine + ATP = CMP + ADP + H(+). The protein operates within pyrimidine metabolism; CTP biosynthesis via salvage pathway; CTP from cytidine: step 1/3. It participates in pyrimidine metabolism; UMP biosynthesis via salvage pathway; UMP from uridine: step 1/1. The chain is Uridine kinase from Oceanobacillus iheyensis (strain DSM 14371 / CIP 107618 / JCM 11309 / KCTC 3954 / HTE831).